The chain runs to 394 residues: Elongation factor Tu 1 (394 aa).

The 195-residue stretch at 10–204 (KPHVNVGTIG…FLDSYIPEPE (195 aa)) folds into the tr-type G domain. The segment at 19 to 26 (GHVDHGKT) is G1. A GTP-binding site is contributed by 19 to 26 (GHVDHGKT). Threonine 26 contacts Mg(2+). A G2 region spans residues 60–64 (GITIN). The G3 stretch occupies residues 81–84 (DCPG). Residues 81–85 (DCPGH) and 136–139 (NKCD) contribute to the GTP site. The G4 stretch occupies residues 136–139 (NKCD). Residues 174 to 176 (SAL) are G5.

It belongs to the TRAFAC class translation factor GTPase superfamily. Classic translation factor GTPase family. EF-Tu/EF-1A subfamily. As to quaternary structure, monomer.

It localises to the cytoplasm. It catalyses the reaction GTP + H2O = GDP + phosphate + H(+). Its function is as follows. GTP hydrolase that promotes the GTP-dependent binding of aminoacyl-tRNA to the A-site of ribosomes during protein biosynthesis. This Shigella flexneri serotype 5b (strain 8401) protein is Elongation factor Tu 1.